Consider the following 623-residue polypeptide: MSSQVIPALPKTFSSSLDLWREKNDQLVRQAKQLTRDSRPSLRRQQSAQDTLEGLRELLLTLQGLPAAVPALPLELTVLCNCIILRASLVQAFTEDLTQDLQRGLERVLEAQHHLEPKSQQGLKELWHSVLSASSLPPELLPALHCLASLQAVFWMSTDHLEDLTLLLQTLNGSQTQSSEDLLLLLKSWSPPAEESPAPLILQDAESLRDVLLTAFACRQGFQELITGSLPHAQSNLHEAASGLCPPSVLVQVYTALGACLRKMGNPQRALLYLTEALKVGTTCALPLLEASRVYRQLGDRAAELESLELLVEALSATHSSETFKSLIEVELLLPQPDPASPLHCGTQSQAKHLLASRCLQTGRAEDAAEHYLDLLAMLLGGSETRFSPPTSSLGPCIPELCLEAAAALIQAGRALDALTVCEELLNRTSSLLPKMSSLWENARKRAKELPCCPVWVSATHLLQGQAWSQLKAQKEALSEFSQCLELLFRTLPEDKEQGSDCEQKCRSDVALKQLRVAALISRGLEWVASGQDTKALSDFLLSVQICPGNRDGSFYLLQTLKRLDRKNEASAFWREAHSQLPLEDAAGSLPLYLETCLSWIHPPNREAFLEEFGTSVLESCVL.

TPR repeat units lie at residues 251 to 284 (VQVY…GTTC), 349 to 382 (SQAK…LLGG), 458 to 491 (SATH…LFRT), and 517 to 550 (VAAL…CPGN).

As to quaternary structure, belongs to the multisubunit FA complex composed of FANCA, FANCB, FANCC, FANCE, FANCF, FANCG, FANCL/PHF9 and FANCM. In complex with FANCF, FANCA and FANCL, but not with FANCC, nor FANCE, interacts with HES1; this interaction may be essential for the stability and nuclear localization of FA core complex proteins. The complex with FANCC and FANCG may also include EIF2AK2 and HSP70. Highest expression levels in spleen, thymus and testis.

Its subcellular location is the nucleus. Functionally, DNA repair protein that may operate in a postreplication repair or a cell cycle checkpoint function. May be implicated in interstrand DNA cross-link repair and in the maintenance of normal chromosome stability. Candidate tumor suppressor gene. The polypeptide is Fanconi anemia group G protein homolog (Fancg) (Mus musculus (Mouse)).